A 120-amino-acid polypeptide reads, in one-letter code: NAD(P)H-quinone oxidoreductase subunit 3 (120 aa).

A run of 3 helical transmembrane segments spans residues 10-30 (LLVFLIVCSLLPILALGASAL), 64-84 (MFALVFVIFDVETVFLYPWAV), and 89-109 (LGLLAFVEALIFIAILVVGLV).

Belongs to the complex I subunit 3 family. In terms of assembly, NDH-1 can be composed of about 15 different subunits; different subcomplexes with different compositions have been identified which probably have different functions.

The protein resides in the cellular thylakoid membrane. The catalysed reaction is a plastoquinone + NADH + (n+1) H(+)(in) = a plastoquinol + NAD(+) + n H(+)(out). The enzyme catalyses a plastoquinone + NADPH + (n+1) H(+)(in) = a plastoquinol + NADP(+) + n H(+)(out). Functionally, NDH-1 shuttles electrons from an unknown electron donor, via FMN and iron-sulfur (Fe-S) centers, to quinones in the respiratory and/or the photosynthetic chain. The immediate electron acceptor for the enzyme in this species is believed to be plastoquinone. Couples the redox reaction to proton translocation, and thus conserves the redox energy in a proton gradient. Cyanobacterial NDH-1 also plays a role in inorganic carbon-concentration. The polypeptide is NAD(P)H-quinone oxidoreductase subunit 3 (Synechococcus sp. (strain JA-2-3B'a(2-13)) (Cyanobacteria bacterium Yellowstone B-Prime)).